Here is a 354-residue protein sequence, read N- to C-terminus: Probable protein phosphatase 2C 69 (354 aa).

A PPM-type phosphatase domain is found at 33–279 (SYGYASSAGK…DNITCVVVRF (247 aa)). Asp69, Gly70, Asp231, and Asp270 together coordinate Mn(2+). A disordered region spans residues 289-354 (HISSSSSKEA…LERNSVTDKV (66 aa)). Composition is skewed to polar residues over residues 309-328 (ISSNEAKQVQIGSGNKPENV) and 336-348 (ASRSTDTLTLERN).

It belongs to the PP2C family. Mg(2+) serves as cofactor. Mn(2+) is required as a cofactor.

It carries out the reaction O-phospho-L-seryl-[protein] + H2O = L-seryl-[protein] + phosphate. The catalysed reaction is O-phospho-L-threonyl-[protein] + H2O = L-threonyl-[protein] + phosphate. The chain is Probable protein phosphatase 2C 69 from Arabidopsis thaliana (Mouse-ear cress).